The sequence spans 290 residues: GTPase Era (290 aa).

The Era-type G domain occupies 2–169 (KSGFVSIIGR…KDKIYENLNE (168 aa)). Positions 10-17 (GRPSTGKS) are G1. Residue 10 to 17 (GRPSTGKS) coordinates GTP. The tract at residues 36-40 (QTTRN) is G2. Positions 57–60 (DTPG) are G3. GTP contacts are provided by residues 57 to 61 (DTPGF) and 119 to 122 (NKID). Residues 119–122 (NKID) form a G4 region. Residues 148–150 (ISA) form a G5 region. Residues 200 to 276 (LKEELPYSIY…NLFLQVKLRK (77 aa)) form the KH type-2 domain.

Belongs to the TRAFAC class TrmE-Era-EngA-EngB-Septin-like GTPase superfamily. Era GTPase family. Monomer.

It is found in the cytoplasm. Its subcellular location is the cell inner membrane. An essential GTPase that binds both GDP and GTP, with rapid nucleotide exchange. Plays a role in 16S rRNA processing and 30S ribosomal subunit biogenesis and possibly also in cell cycle regulation and energy metabolism. The polypeptide is GTPase Era (Borrelia duttonii (strain Ly)).